A 51-amino-acid chain; its full sequence is Ribosomal protein eL39-like 2 (51 aa).

The protein belongs to the eukaryotic ribosomal protein eL39 family. In terms of assembly, component of a male germ cell-specific 60S large ribosomal subunit (LSU), which contains RPL10L and RPL39L, instead of RPL10 and RPL39 paralogs. The composition of the rest of the complex is similar to classical ribosomes. As to expression, testis specific.

The protein resides in the cytoplasm. Its function is as follows. Male germ cell-specific component of the ribosome, which is required for the formation of sperm and male fertility. Replaces the RPL39 paralog in the ribosome of male germ cells. The ribosome is a large ribonucleoprotein complex responsible for the synthesis of proteins in the cell. The male germ cell-specific ribosome displays a ribosomal polypeptide exit tunnel of distinct size and charge states compared with the classical ribosome. It is responsible for regulating the biosynthesis and folding of a subset of male germ-cell-specific proteins that are essential for the formation of sperm. The chain is Ribosomal protein eL39-like 2 from Homo sapiens (Human).